The following is a 358-amino-acid chain: Probable tartrate dehydrogenase/decarboxylase TtuC' (358 aa).

Mn(2+) contacts are provided by Asp-222, Asp-246, and Asp-250.

The protein belongs to the isocitrate and isopropylmalate dehydrogenases family. Requires Mg(2+) as cofactor. Mn(2+) serves as cofactor. K(+) is required as a cofactor.

Its subcellular location is the cytoplasm. It carries out the reaction tartrate + NAD(+) = 2-hydroxy-3-oxosuccinate + NADH + H(+). The enzyme catalyses (2R,3S)-tartrate + NAD(+) = 2-hydroxy-3-oxosuccinate + NADH + H(+). It catalyses the reaction (2R,3R)-tartrate + NAD(+) = 2-hydroxy-3-oxosuccinate + NADH + H(+). The catalysed reaction is (2R,3R)-tartrate + H(+) = (R)-glycerate + CO2. It carries out the reaction (R)-malate + NAD(+) = pyruvate + CO2 + NADH. It participates in carbohydrate acid metabolism; tartrate degradation; 2-hydroxy-3-oxosuccinate from L-tartrate: step 1/1. It functions in the pathway carbohydrate acid metabolism; tartrate degradation; 2-hydroxy-3-oxosuccinate from meso-tartrate: step 1/1. The protein operates within carbohydrate acid metabolism; tartrate degradation; D-glycerate from L-tartrate: step 1/1. In terms of biological role, has multiple catalytic activities. Apart from catalyzing the oxidation of (+)-tartrate to oxaloglycolate, also converts meso-tartrate to D-glycerate and catalyzes the oxidative decarboxylation of D-malate to pyruvate. In Agrobacterium vitis (Rhizobium vitis), this protein is Probable tartrate dehydrogenase/decarboxylase TtuC' (ttuC').